The primary structure comprises 343 residues: 3-dehydroquinate synthase (343 aa).

NAD(+) contacts are provided by residues 61–66, 95–99, 119–120, Lys-132, Lys-141, and 159–162; these read SGEKYK, GVISD, TT, and FLKT. Zn(2+) is bound by residues Glu-174, His-231, and His-248.

It belongs to the sugar phosphate cyclases superfamily. Dehydroquinate synthase family. Co(2+) is required as a cofactor. Requires Zn(2+) as cofactor. It depends on NAD(+) as a cofactor.

The protein resides in the cytoplasm. It catalyses the reaction 7-phospho-2-dehydro-3-deoxy-D-arabino-heptonate = 3-dehydroquinate + phosphate. The protein operates within metabolic intermediate biosynthesis; chorismate biosynthesis; chorismate from D-erythrose 4-phosphate and phosphoenolpyruvate: step 2/7. Its function is as follows. Catalyzes the conversion of 3-deoxy-D-arabino-heptulosonate 7-phosphate (DAHP) to dehydroquinate (DHQ). The sequence is that of 3-dehydroquinate synthase from Helicobacter pylori (strain G27).